A 242-amino-acid polypeptide reads, in one-letter code: Placenta-expressed transcript 1 protein (242 aa).

A signal peptide spans 1–26 (MAILRSLLLPLGLLLCLWLLCSPASC). The Extracellular segment spans residues 27–220 (TNSTTNCKPF…TTHKSSANRA (194 aa)). Residues asparagine 28, asparagine 81, and asparagine 106 are each glycosylated (N-linked (GlcNAc...) asparagine). Residues 162–209 (VITTPTHKPTPAPPKPTTNPQKTTTNHSIPTTSLPKPTTSLYTSHPKL) are disordered. Residues 169–178 (KPTPAPPKPT) show a composition bias toward pro residues. The segment covering 179 to 205 (TNPQKTTTNHSIPTTSLPKPTTSLYTS) has biased composition (low complexity). Residues 221–241 (FLCPVREAIQILFIFLIGTLL) form a helical membrane-spanning segment. Phenylalanine 242 is a topological domain (cytoplasmic).

Post-translationally, N-glycosylated.

The protein resides in the membrane. It localises to the apical cell membrane. Functionally, modulates leading keratinocyte migration and cellular adhesion to matrix proteins during a wound-healing response and promotes wound repair. May play a role during trichilemmal differentiation of the hair follicle. The sequence is that of Placenta-expressed transcript 1 protein (PLET1) from Bos taurus (Bovine).